The following is a 414-amino-acid chain: 2,3-diketo-5-methylthiopentyl-1-phosphate enolase (414 aa).

Lys99 acts as the Proton acceptor in catalysis. Residues Lys148, 174–177 (KDDE), His265, Gly338, and 360–361 (GG) each bind substrate. Positions 174, 176, and 177 each coordinate Mg(2+). N6-carboxylysine is present on Lys174.

This sequence belongs to the RuBisCO large chain family. Type IV subfamily. As to quaternary structure, homodimer. It depends on Mg(2+) as a cofactor.

It catalyses the reaction 5-methylsulfanyl-2,3-dioxopentyl phosphate = 2-hydroxy-5-methylsulfanyl-3-oxopent-1-enyl phosphate. The protein operates within amino-acid biosynthesis; L-methionine biosynthesis via salvage pathway; L-methionine from S-methyl-5-thio-alpha-D-ribose 1-phosphate: step 3/6. Functionally, catalyzes the enolization of 2,3-diketo-5-methylthiopentyl-1-phosphate (DK-MTP-1-P) into 2-hydroxy-3-keto-5-methylthiopentenyl-1-phosphate (HK-MTPenyl-1-P). The chain is 2,3-diketo-5-methylthiopentyl-1-phosphate enolase from Bacillus anthracis (strain CDC 684 / NRRL 3495).